The primary structure comprises 360 residues: Peptide chain release factor 1 (360 aa).

Gln-235 carries the post-translational modification N5-methylglutamine.

Belongs to the prokaryotic/mitochondrial release factor family. Post-translationally, methylated by PrmC. Methylation increases the termination efficiency of RF1.

The protein resides in the cytoplasm. Its function is as follows. Peptide chain release factor 1 directs the termination of translation in response to the peptide chain termination codons UAG and UAA. This is Peptide chain release factor 1 from Cupriavidus pinatubonensis (strain JMP 134 / LMG 1197) (Cupriavidus necator (strain JMP 134)).